Here is a 263-residue protein sequence, read N- to C-terminus: NH(3)-dependent NAD(+) synthetase (263 aa).

29 to 36 (GISGGIDS) provides a ligand contact to ATP. A Mg(2+)-binding site is contributed by Asp35. Arg114 contacts deamido-NAD(+). Residue Thr134 participates in ATP binding. Glu139 is a binding site for Mg(2+). Deamido-NAD(+) is bound by residues Lys147 and Asp154. ATP is bound by residues Lys163 and Ser185. Residue 244-245 (HK) coordinates deamido-NAD(+).

Belongs to the NAD synthetase family. In terms of assembly, homodimer.

It carries out the reaction deamido-NAD(+) + NH4(+) + ATP = AMP + diphosphate + NAD(+) + H(+). Its pathway is cofactor biosynthesis; NAD(+) biosynthesis; NAD(+) from deamido-NAD(+) (ammonia route): step 1/1. Functionally, catalyzes the ATP-dependent amidation of deamido-NAD to form NAD. Uses ammonia as a nitrogen source. The polypeptide is NH(3)-dependent NAD(+) synthetase (Methanococcoides burtonii (strain DSM 6242 / NBRC 107633 / OCM 468 / ACE-M)).